We begin with the raw amino-acid sequence, 547 residues long: Methionine--tRNA ligase (547 aa).

The 'HIGH' region signature appears at 15-25 (PYANGSLHLGH). Positions 146, 149, 159, and 162 each coordinate Zn(2+). Positions 332–336 (KMSKS) match the 'KMSKS' region motif. ATP is bound at residue K335.

Belongs to the class-I aminoacyl-tRNA synthetase family. MetG type 1 subfamily. As to quaternary structure, monomer. It depends on Zn(2+) as a cofactor.

It localises to the cytoplasm. It carries out the reaction tRNA(Met) + L-methionine + ATP = L-methionyl-tRNA(Met) + AMP + diphosphate. Its function is as follows. Is required not only for elongation of protein synthesis but also for the initiation of all mRNA translation through initiator tRNA(fMet) aminoacylation. The chain is Methionine--tRNA ligase from Baumannia cicadellinicola subsp. Homalodisca coagulata.